The sequence spans 332 residues: Phosphate acyltransferase (332 aa).

Belongs to the PlsX family. As to quaternary structure, homodimer. Probably interacts with PlsY.

Its subcellular location is the cytoplasm. The catalysed reaction is a fatty acyl-[ACP] + phosphate = an acyl phosphate + holo-[ACP]. It participates in lipid metabolism; phospholipid metabolism. Functionally, catalyzes the reversible formation of acyl-phosphate (acyl-PO(4)) from acyl-[acyl-carrier-protein] (acyl-ACP). This enzyme utilizes acyl-ACP as fatty acyl donor, but not acyl-CoA. The chain is Phosphate acyltransferase from Clostridium novyi (strain NT).